The sequence spans 135 residues: Small ribosomal subunit protein bS18 (135 aa).

Positions 1–65 (MARPDMGGPK…GDEGGGRRGF (65 aa)) are disordered. Residues 9 to 41 (PKMGGGFGGPRSGGFGGGGGGGGFGGGGFGGGR) are compositionally biased toward gly residues. Residues 42-61 (GGDRGDRGDRDDRGGDEGGG) show a composition bias toward basic and acidic residues.

The protein belongs to the bacterial ribosomal protein bS18 family. Part of the 30S ribosomal subunit. Forms a tight heterodimer with protein bS6.

Its function is as follows. Binds as a heterodimer with protein bS6 to the central domain of the 16S rRNA, where it helps stabilize the platform of the 30S subunit. This Anaeromyxobacter dehalogenans (strain 2CP-C) protein is Small ribosomal subunit protein bS18.